The chain runs to 153 residues: Ribosomal RNA large subunit methyltransferase H (153 aa).

Residues Leu-70, Gly-102, and 121–126 (LSAMTF) contribute to the S-adenosyl-L-methionine site.

It belongs to the RNA methyltransferase RlmH family. Homodimer.

Its subcellular location is the cytoplasm. It carries out the reaction pseudouridine(1915) in 23S rRNA + S-adenosyl-L-methionine = N(3)-methylpseudouridine(1915) in 23S rRNA + S-adenosyl-L-homocysteine + H(+). In terms of biological role, specifically methylates the pseudouridine at position 1915 (m3Psi1915) in 23S rRNA. The polypeptide is Ribosomal RNA large subunit methyltransferase H (Trichlorobacter lovleyi (strain ATCC BAA-1151 / DSM 17278 / SZ) (Geobacter lovleyi)).